A 158-amino-acid polypeptide reads, in one-letter code: NAD(P)H-quinone oxidoreductase subunit J, chloroplastic (158 aa).

It belongs to the complex I 30 kDa subunit family. In terms of assembly, NDH is composed of at least 16 different subunits, 5 of which are encoded in the nucleus.

Its subcellular location is the plastid. It is found in the chloroplast thylakoid membrane. The enzyme catalyses a plastoquinone + NADH + (n+1) H(+)(in) = a plastoquinol + NAD(+) + n H(+)(out). It carries out the reaction a plastoquinone + NADPH + (n+1) H(+)(in) = a plastoquinol + NADP(+) + n H(+)(out). NDH shuttles electrons from NAD(P)H:plastoquinone, via FMN and iron-sulfur (Fe-S) centers, to quinones in the photosynthetic chain and possibly in a chloroplast respiratory chain. The immediate electron acceptor for the enzyme in this species is believed to be plastoquinone. Couples the redox reaction to proton translocation, and thus conserves the redox energy in a proton gradient. The protein is NAD(P)H-quinone oxidoreductase subunit J, chloroplastic of Solanum bulbocastanum (Wild potato).